Here is a 169-residue protein sequence, read N- to C-terminus: ATP synthase subunit b (169 aa).

A helical membrane pass occupies residues 12 to 32; the sequence is HIYLGNALWYLICFAILLLLI.

It belongs to the ATPase B chain family. F-type ATPases have 2 components, F(1) - the catalytic core - and F(0) - the membrane proton channel. F(1) has five subunits: alpha(3), beta(3), gamma(1), delta(1), epsilon(1). F(0) has three main subunits: a(1), b(2) and c(10-14). The alpha and beta chains form an alternating ring which encloses part of the gamma chain. F(1) is attached to F(0) by a central stalk formed by the gamma and epsilon chains, while a peripheral stalk is formed by the delta and b chains.

It is found in the cell membrane. F(1)F(0) ATP synthase produces ATP from ADP in the presence of a proton or sodium gradient. F-type ATPases consist of two structural domains, F(1) containing the extramembraneous catalytic core and F(0) containing the membrane proton channel, linked together by a central stalk and a peripheral stalk. During catalysis, ATP synthesis in the catalytic domain of F(1) is coupled via a rotary mechanism of the central stalk subunits to proton translocation. In terms of biological role, component of the F(0) channel, it forms part of the peripheral stalk, linking F(1) to F(0). The chain is ATP synthase subunit b from Lactobacillus helveticus (strain DPC 4571).